Consider the following 83-residue polypeptide: Neurotoxin LmNaTx34.5 (83 aa).

An N-terminal signal peptide occupies residues 1–15 (FILVVIALMVIEVKS). Residues 16–82 (DGYLMVRAGR…IWTYEKNTCS (67 aa)) enclose the LCN-type CS-alpha/beta domain. Intrachain disulfides connect C29–C81, C33–C54, C40–C61, and C44–C63.

It belongs to the long (4 C-C) scorpion toxin superfamily. Sodium channel inhibitor family. Beta subfamily. Expressed by the venom gland.

It localises to the secreted. Its function is as follows. Binds voltage-independently at site-4 of sodium channels (Nav) and shift the voltage of activation toward more negative potentials thereby affecting sodium channel activation and promoting spontaneous and repetitive firing. The polypeptide is Neurotoxin LmNaTx34.5 (Lychas mucronatus (Chinese swimming scorpion)).